The following is a 331-amino-acid chain: Anthranilate phosphoribosyltransferase (331 aa).

5-phospho-alpha-D-ribose 1-diphosphate contacts are provided by residues G79, 82 to 83 (GD), S87, 89 to 92 (NIST), 107 to 115 (KHCNTSISS), and S119. G79 serves as a coordination point for anthranilate. S91 provides a ligand contact to Mg(2+). Anthranilate is bound at residue N110. R165 contacts anthranilate. The Mg(2+) site is built by D223 and E224.

It belongs to the anthranilate phosphoribosyltransferase family. As to quaternary structure, homodimer. It depends on Mg(2+) as a cofactor.

It carries out the reaction N-(5-phospho-beta-D-ribosyl)anthranilate + diphosphate = 5-phospho-alpha-D-ribose 1-diphosphate + anthranilate. The protein operates within amino-acid biosynthesis; L-tryptophan biosynthesis; L-tryptophan from chorismate: step 2/5. In terms of biological role, catalyzes the transfer of the phosphoribosyl group of 5-phosphorylribose-1-pyrophosphate (PRPP) to anthranilate to yield N-(5'-phosphoribosyl)-anthranilate (PRA). In Buchnera aphidicola subsp. Schlechtendalia chinensis, this protein is Anthranilate phosphoribosyltransferase.